The primary structure comprises 245 residues: CMRF35-like molecule 3 (245 aa).

Positions 1–18 (MWQFPALLFLFLPGCCTA) are cleaved as a signal peptide. In terms of domain architecture, Ig-like V-type spans 19-124 (QDPVTGPEEV…TDPMFKVNVN (106 aa)). The Extracellular portion of the chain corresponds to 19 to 189 (QDPVTGPEEV…FIWSLLSSIS (171 aa)). A disulfide bridge links cysteine 40 with cysteine 108. Important for maintaining surface expression and for interaction with FCER1G regions lie at residues 177–182 (NSLFIW) and 189–198 (SFLLMVFVVV). The helical transmembrane segment at 190–210 (FLLMVFVVVPLLLSMLSAVLW) threads the bilayer. At 211-245 (VNRPQRHYGGGEIGLVETHRSDALDGEKHFPGDEK) the chain is on the cytoplasmic side.

It belongs to the CD300 family. As to quaternary structure, interacts with FCER1G; the interaction may be indirect. Interacts with TLR9. Highly expressed in bone marrow-derived mast cells and macrophages, peripheral blood monocytes and CD11c+ cells, with weaker expression detected in CD11b cells in bone marrow and peripheral blood. Not detected in B220+ cells in bone marrow or spleen, in Thy-1.2+ or CD3+ cells in peripheral blood, spleen or thymus, or in NK1.1+ cells in spleen (at protein level). Widely expressed in various tissues including heart, liver, spleen, lung, kidney, brain, bone marrow, thymus, axillary lymph node and mesenteric lymph node. Highly expressed in macrophage cell lines J774.1 and RAW 264.7 and in mast cell line MC/9. Weak expression detected in B-lineage cell lines WEHI-231 and A20 and in dendritic cell line DC2.4. Not detected in other myeloid cell lines or T-lineage cell lines.

It is found in the cell membrane. The protein localises to the early endosome. The protein resides in the lysosome. In terms of biological role, acts as an activating receptor inducing cytokine production in mast cells. Can act as a positive regulator of TLR9 signaling in macrophages, leading to enhanced production of pro-inflammatory cytokines. The sequence is that of CMRF35-like molecule 3 from Mus musculus (Mouse).